Reading from the N-terminus, the 476-residue chain is MKVSLPAFEKARVLVVGDVMLDRYWVGPTGRISPEAPVPVVKINQVEDRPGGAANVALNIATLGGQVQLAGLVGQDDTAHALTLGVQTLGVEPQWLTIADKPTITKLRVLSRNQQLIRLDFEEAFDKADSVRLLKQSEALLDSVDVVVLSDYAKGAIDQPRDFIALARAKGVMVLVDPKGSDFGRYQGASLITPNMSEFEAVVGTVTSEADLLEKARGLLKQHNFDAILVTRSEKGMTLVTANAPELHIPTVAREVYDVTGAGDTVISALATSLAAGADLPQACAIANTAAGVVVGKLGTSTVSRIELIEALALHHGESGFGVVSEDQLAYALEQAKLRGERVVMTNGCFDILHAGHVSYLKQAKALGDRLIVAVNDDASVKRLKGDGRPVNQVDRRMAVLAGLASVDWVVPFSEDTPQRIITRLLPNLLVKGGDYKLEDIAGGAEVIAAGGQVQVLGFEDGFSTTAIIQNIMANQ.

Residues methionine 1–serine 319 are ribokinase. Residue asparagine 195 to glutamate 198 coordinates ATP. Residue aspartate 264 is part of the active site. The tract at residues methionine 345 to glutamine 476 is cytidylyltransferase.

In the N-terminal section; belongs to the carbohydrate kinase PfkB family. It in the C-terminal section; belongs to the cytidylyltransferase family. Homodimer.

It catalyses the reaction D-glycero-beta-D-manno-heptose 7-phosphate + ATP = D-glycero-beta-D-manno-heptose 1,7-bisphosphate + ADP + H(+). The catalysed reaction is D-glycero-beta-D-manno-heptose 1-phosphate + ATP + H(+) = ADP-D-glycero-beta-D-manno-heptose + diphosphate. It participates in nucleotide-sugar biosynthesis; ADP-L-glycero-beta-D-manno-heptose biosynthesis; ADP-L-glycero-beta-D-manno-heptose from D-glycero-beta-D-manno-heptose 7-phosphate: step 1/4. Its pathway is nucleotide-sugar biosynthesis; ADP-L-glycero-beta-D-manno-heptose biosynthesis; ADP-L-glycero-beta-D-manno-heptose from D-glycero-beta-D-manno-heptose 7-phosphate: step 3/4. Catalyzes the phosphorylation of D-glycero-D-manno-heptose 7-phosphate at the C-1 position to selectively form D-glycero-beta-D-manno-heptose-1,7-bisphosphate. In terms of biological role, catalyzes the ADP transfer from ATP to D-glycero-beta-D-manno-heptose 1-phosphate, yielding ADP-D-glycero-beta-D-manno-heptose. This Shewanella baltica (strain OS185) protein is Bifunctional protein HldE.